The sequence spans 295 residues: Undecaprenyl-diphosphatase (295 aa).

The next 6 membrane-spanning stretches (helical) occupy residues 39–59, 97–117, 121–141, 198–218, 232–252, and 263–283; these read PGAA…LLYF, WYII…QHAI, LRNL…LWIV, AFLM…VKAI, ATIA…IGFL, and FAIY…CGVL.

The protein belongs to the UppP family.

The protein resides in the cell membrane. The catalysed reaction is di-trans,octa-cis-undecaprenyl diphosphate + H2O = di-trans,octa-cis-undecaprenyl phosphate + phosphate + H(+). Catalyzes the dephosphorylation of undecaprenyl diphosphate (UPP). Confers resistance to bacitracin. The sequence is that of Undecaprenyl-diphosphatase from Bifidobacterium animalis subsp. lactis (strain AD011).